Consider the following 148-residue polypeptide: uncharacterized protein (148 aa).

The disordered stretch occupies residues 38–99 (QFRRHHHAEH…RRHLRKGHLK (62 aa)). Positions 64 to 82 (FHHDGGRHGHATRIHENNR) are enriched in basic and acidic residues. Residues 83 to 99 (RPHKRNRRRHLRKGHLK) are compositionally biased toward basic residues.

This is an uncharacterized protein from Fowl adenovirus A serotype 1 (strain CELO / Phelps) (FAdV-1).